The following is a 354-amino-acid chain: MEKQIFEHSVNVEEEHYQPKQEFHNMEAKLDEALDGELLDAQLEQALKPKSSFRKTLLKFTALLFGLATVAQSVQWIWDSYQQHQWIYLAFALVSLIIILLGIKEIICEWRRLVRLKKREQLQQQSQQIWLESAVKNGDVFSVHNAEKSKILCLDIAKSLGLENDSPAVIQWQHQLNEAYSAQEIAHLFSRHVLSSFDAQAKKLISKMAAESAVIVAISPLAVVDMFFIAWRNLRLMNKIAEIYGIELGYFSRIRLLRMVLVNIAFAGATEVAQDIGMDWLSQDVTAKLSTRIAQGIGVGLLTARLGVKAMELCRPLAFQLNEKPKLSYIQQELLSSVKDIVLGKNKIYKKEQI.

The next 3 helical transmembrane spans lie at 57 to 77 (LLKF…VQWI), 87 to 107 (IYLA…KEII), and 211 to 231 (ESAV…FIAW).

The protein belongs to the UPF0283 family.

It localises to the cell inner membrane. This chain is UPF0283 membrane protein CGSHiGG_02710, found in Haemophilus influenzae (strain PittGG).